Consider the following 776-residue polypeptide: Calcium-independent phospholipase A2-gamma (776 aa).

Basic and acidic residues-rich tracts occupy residues 226–238 (RQLQDKPCLEESK) and 307–331 (LKSDPKSQPEEEEEPSKTDEPICKD). Disordered regions lie at residues 226-274 (RQLQ…EALP) and 306-331 (KLKSDPKSQPEEEEEPSKTDEPICKD). Residues 439-634 (LAIDGGGTRG…LLNNPSALAL (196 aa)) form the PNPLA domain. Residues 443 to 448 (GGGTRG) carry the GXGXXG motif. A helical transmembrane segment spans residues 469–489 (LFDYICGVSTGAILAFMLGLF). The GXSXG motif lies at 475 to 479 (GVSTG). Ser477 functions as the Nucleophile in the catalytic mechanism. Asp621 acts as the Proton acceptor in catalysis. The DGA/G signature appears at 621 to 623 (DGG). Position 730 is an N6-succinyllysine (Lys730).

The protein localises to the endoplasmic reticulum membrane. The protein resides in the microsome membrane. It localises to the mitochondrion membrane. Its subcellular location is the peroxisome membrane. The enzyme catalyses a 1,2-diacyl-sn-glycero-3-phosphocholine + H2O = a 1-acyl-sn-glycero-3-phosphocholine + a fatty acid + H(+). The catalysed reaction is a 1,2-diacyl-sn-glycero-3-phosphocholine + H2O = a 2-acyl-sn-glycero-3-phosphocholine + a fatty acid + H(+). It catalyses the reaction a 1,2-diacyl-sn-glycero-3-phosphoethanolamine + H2O = a 1-acyl-sn-glycero-3-phosphoethanolamine + a fatty acid + H(+). It carries out the reaction a 1-O-(1Z-alkenyl)-2-acyl-sn-glycero-3-phosphocholine + H2O = a 1-O-(1Z-alkenyl)-sn-glycero-3-phosphocholine + a fatty acid + H(+). The enzyme catalyses a 1-acyl-sn-glycero-3-phosphocholine + H2O = sn-glycerol 3-phosphocholine + a fatty acid + H(+). The catalysed reaction is 1-acyl-2-(9Z,12Z)-octadecadienoyl-sn-glycero-3-phosphocholine + H2O = a 1-acyl-sn-glycero-3-phosphocholine + (9Z,12Z)-octadecadienoate + H(+). It catalyses the reaction 1-acyl-2-(5Z,8Z,11Z,14Z-eicosatetraenoyl)-sn-glycero-3-phosphocholine + H2O = a 1-acyl-sn-glycero-3-phosphocholine + (5Z,8Z,11Z,14Z)-eicosatetraenoate + H(+). It carries out the reaction 1-hexadecanoyl-2-(5Z,8Z,11Z,14Z-eicosatetraenoyl)-sn-glycero-3-phosphocholine + H2O = 1-hexadecanoyl-sn-glycero-3-phosphocholine + (5Z,8Z,11Z,14Z)-eicosatetraenoate + H(+). The enzyme catalyses 1-octadecanoyl-2-(9Z-octadecenoyl)-sn-glycero-3-phosphocholine + H2O = 1-octadecanoyl-sn-glycero-3-phosphocholine + (9Z)-octadecenoate + H(+). The catalysed reaction is 1-hexadecanoyl-2-(9Z-octadecenoyl)-sn-glycero-3-phosphocholine + H2O = 1-hexadecanoyl-sn-glycero-3-phosphocholine + (9Z)-octadecenoate + H(+). It catalyses the reaction 1-hexadecanoyl-2-(9Z,12Z-octadecadienoyl)-sn-glycero-3-phosphocholine + H2O = (9Z,12Z)-octadecadienoate + 1-hexadecanoyl-sn-glycero-3-phosphocholine + H(+). It carries out the reaction 1-acyl-2-(9Z,12Z)-octadecadienoyl-sn-glycero-3-phosphoethanolamine + H2O = a 1-acyl-sn-glycero-3-phosphoethanolamine + (9Z,12Z)-octadecadienoate + H(+). The enzyme catalyses 1-acyl-2-(5Z,8Z,11Z,14Z)-eicosatetraenoyl-sn-glycero-3-phosphoethanolamine + H2O = a 1-acyl-sn-glycero-3-phosphoethanolamine + (5Z,8Z,11Z,14Z)-eicosatetraenoate + H(+). The catalysed reaction is 1-hexadecanoyl-2-(5Z,8Z,11Z,14Z-eicosatetraenoyl)-sn-glycero-3-phosphoethanolamine + H2O = 1-hexadecanoyl-sn-glycero-3-phosphoethanolamine + (5Z,8Z,11Z,14Z)-eicosatetraenoate + H(+). It catalyses the reaction 1-hexadecanoyl-2-(5Z,8Z,11Z,14Z-eicosatetraenoyl)-sn-glycero-3-phosphocholine + H2O = 2-(5Z,8Z,11Z,14Z)-eicosatetraenoyl-sn-glycero-3-phosphocholine + hexadecanoate + H(+). It carries out the reaction 1-octadecanoyl-2-(9Z-octadecenoyl)-sn-glycero-3-phosphocholine + H2O = 2-(9Z-octadecenoyl)-sn-glycero-3-phosphocholine + octadecanoate + H(+). The enzyme catalyses 1-hexadecanoyl-2-(4Z,7Z,10Z,13Z,16Z,19Z-docosahexaenoyl)-sn-glycero-3-phosphocholine + H2O = 2-(4Z,7Z,10Z,13Z,16Z,19Z-docosahexaenoyl)-sn-glycero-3-phosphocholine + hexadecanoate + H(+). The catalysed reaction is 1-O-(1Z)-hexadecenyl-2 (5Z,8Z,11Z,14Z)-eicosatetraenoyl-sn-glycero-3-phosphocholine + H2O = 1-(1Z-hexadecenyl)-sn-glycero-3-phosphocholine + (5Z,8Z,11Z,14Z)-eicosatetraenoate + H(+). It catalyses the reaction 1-O-(1Z-hexadecenyl)-2-(9Z-octadecenoyl)-sn-glycero-3-phosphocholine + H2O = 1-(1Z-hexadecenyl)-sn-glycero-3-phosphocholine + (9Z)-octadecenoate + H(+). It carries out the reaction 1-hexadecanoyl-sn-glycero-3-phosphocholine + H2O = sn-glycerol 3-phosphocholine + hexadecanoate + H(+). The enzyme catalyses 1',3'-bis-[1,2-di-(9Z,12Z-octadecadienoyl)-sn-glycero-3-phospho]-glycerol + H2O = 1'-[1,2-di-(9Z,12Z-octadecadienoyl)-sn-glycero-3-phospho]-3'-[1-(9Z,12Z-octadecadienoyl)-sn-glycero-3-phospho]-glycerol + (9Z,12Z)-octadecadienoate + H(+). The catalysed reaction is 1'-[1-acyl-2-(9-hydroxy-(10E,12Z)-octadecadienoyl)-sn-glycero-3-phospho]-3'-[1,2-diacyl-sn-glycero-3-phospho]-glycerol + H2O = 9-hydroxy-(10E,12Z)-octadecadienoate + 1'-[1,2-diacyl-sn-glycero-3-phospho],3'-[1-acyl-sn-glycero-3-phospho]-glycerol + H(+). It participates in phospholipid metabolism. Its activity is regulated as follows. Calcium-independent phospholipase. In terms of biological role, calcium-independent and membrane-bound phospholipase, that catalyzes the esterolytic cleavage of fatty acids from glycerophospholipids to yield free fatty acids and lysophospholipids, hence regulating membrane physical properties and the release of lipid second messengers and growth factors. Hydrolyzes phosphatidylethanolamine, phosphatidylcholine and probably phosphatidylinositol with a possible preference for the former. Has also a broad substrate specificity in terms of fatty acid moieties, hydrolyzing saturated and mono-unsaturated fatty acids at nearly equal rates from either the sn-1 or sn-2 position in diacyl phosphatidylcholine. However, has a weak activity toward polyunsaturated fatty acids at the sn-2 position, and thereby favors the production of 2-arachidonoyl lysophosphatidylcholine, a key branch point metabolite in eicosanoid signaling. On the other hand, can produce arachidonic acid from the sn-1 position of diacyl phospholipid and from the sn-2 position of arachidonate-containing plasmalogen substrates. Therefore, plays an important role in the mobilization of arachidonic acid in response to cellular stimuli and the generation of lipid second messengers. Can also hydrolyze lysophosphatidylcholine. In the mitochondrial compartment, catalyzes the hydrolysis and release of oxidized aliphatic chains from cardiolipin and integrates mitochondrial bioenergetics and signaling. It is essential for maintaining efficient bioenergetic mitochondrial function through tailoring mitochondrial membrane lipid metabolism and composition. This chain is Calcium-independent phospholipase A2-gamma, found in Rattus norvegicus (Rat).